We begin with the raw amino-acid sequence, 208 residues long: Exosome complex component CSL4 homolog (208 aa).

In terms of assembly, component of the RNA exosome complex. As to expression, ubiquitously expressed.

Its subcellular location is the nucleus. The protein resides in the nucleolus. It is found in the nucleoplasm. Functionally, non-catalytic component of the RNA exosome complex which has 3'-&gt;5' exoribonuclease activity and participates in a multitude of cellular RNA processing and degradation events. Involved in regulation of antisense ribosomal siRNA production. Involved in response to cold-warm shock. The protein is Exosome complex component CSL4 homolog of Caenorhabditis elegans.